We begin with the raw amino-acid sequence, 312 residues long: Ribosomal RNA small subunit methyltransferase H (312 aa).

S-adenosyl-L-methionine-binding positions include 33-35, D52, F81, D102, and Q109; that span reads GGH.

It belongs to the methyltransferase superfamily. RsmH family.

The protein localises to the cytoplasm. It catalyses the reaction cytidine(1402) in 16S rRNA + S-adenosyl-L-methionine = N(4)-methylcytidine(1402) in 16S rRNA + S-adenosyl-L-homocysteine + H(+). In terms of biological role, specifically methylates the N4 position of cytidine in position 1402 (C1402) of 16S rRNA. The sequence is that of Ribosomal RNA small subunit methyltransferase H from Leuconostoc mesenteroides subsp. mesenteroides (strain ATCC 8293 / DSM 20343 / BCRC 11652 / CCM 1803 / JCM 6124 / NCDO 523 / NBRC 100496 / NCIMB 8023 / NCTC 12954 / NRRL B-1118 / 37Y).